Consider the following 342-residue polypeptide: Heparan sulfate glucosamine 3-O-sulfotransferase 6 (342 aa).

The Cytoplasmic segment spans residues 1–31 (MAGSGGLGGGAGDLQGAGTGQGTALRALRAP). Residues 32–49 (LALVVLLLSAYCLFALPG) traverse the membrane as a helical; Signal-anchor for type II membrane protein segment. The Lumenal segment spans residues 50–342 (RCPPAARAPA…QMTGQDFGWD (293 aa)). A disordered region spans residues 56 to 75 (RAPAPVPAPAEPPHTSLRLR). Residue 100-104 (KGGTR) participates in 3'-phosphoadenylyl sulfate binding. Substrate is bound by residues 122–128 (EPHFFDR) and 153–156 (KTPS). 3'-phosphoadenylyl sulfate contacts are provided by arginine 181 and serine 189. 220–221 (WS) lines the substrate pocket. The N-linked (GlcNAc...) asparagine glycan is linked to asparagine 281. Residues cysteine 288 and cysteine 300 are joined by a disulfide bond. 305–309 (KGRPH) contributes to the 3'-phosphoadenylyl sulfate binding site.

Belongs to the sulfotransferase 1 family. As to expression, expressed in liver and kidney, followed by heart, brain, lung and testis.

The protein localises to the golgi apparatus membrane. It catalyses the reaction alpha-D-glucosaminyl-[heparan sulfate](n) + 3'-phosphoadenylyl sulfate = 3-sulfo-alpha-D-glucosaminyl-[heparan sulfate](n) + adenosine 3',5'-bisphosphate + H(+). Sulfotransferase that utilizes 3'-phospho-5'-adenylyl sulfate (PAPS) to catalyze the transfer of a sulfo group to heparan sulfate. Unlike 3-OST-1, does not convert non-anticoagulant heparan sulfate to anticoagulant heparan sulfate. This is Heparan sulfate glucosamine 3-O-sulfotransferase 6 (Hs3st6) from Mus musculus (Mouse).